The sequence spans 223 residues: Octanoyltransferase (223 aa).

A BPL/LPL catalytic domain is found at 30–214 (DLDRDCFLLT…IVADLFGEFT (185 aa)). Substrate-binding positions include 75-82 (RGGEITYH), 144-146 (SIG), and 157-159 (GFA). Cys175 (acyl-thioester intermediate) is an active-site residue.

It belongs to the LipB family.

Its subcellular location is the cytoplasm. It carries out the reaction octanoyl-[ACP] + L-lysyl-[protein] = N(6)-octanoyl-L-lysyl-[protein] + holo-[ACP] + H(+). It participates in protein modification; protein lipoylation via endogenous pathway; protein N(6)-(lipoyl)lysine from octanoyl-[acyl-carrier-protein]: step 1/2. Functionally, catalyzes the transfer of endogenously produced octanoic acid from octanoyl-acyl-carrier-protein onto the lipoyl domains of lipoate-dependent enzymes. Lipoyl-ACP can also act as a substrate although octanoyl-ACP is likely to be the physiological substrate. This is Octanoyltransferase from Desulfotalea psychrophila (strain LSv54 / DSM 12343).